The chain runs to 359 residues: 3-isopropylmalate dehydrogenase (359 aa).

76 to 89 provides a ligand contact to NAD(+); the sequence is GPKWDDPSAKTRPE. Arg-96, Arg-106, Arg-134, and Asp-223 together coordinate substrate. Asp-223, Asp-247, and Asp-251 together coordinate Mg(2+). 281-293 is a binding site for NAD(+); the sequence is GSAPDIAGKSVAN.

This sequence belongs to the isocitrate and isopropylmalate dehydrogenases family. LeuB type 1 subfamily. Homodimer. Mg(2+) serves as cofactor. It depends on Mn(2+) as a cofactor.

The protein localises to the cytoplasm. The catalysed reaction is (2R,3S)-3-isopropylmalate + NAD(+) = 4-methyl-2-oxopentanoate + CO2 + NADH. Its pathway is amino-acid biosynthesis; L-leucine biosynthesis; L-leucine from 3-methyl-2-oxobutanoate: step 3/4. Its function is as follows. Catalyzes the oxidation of 3-carboxy-2-hydroxy-4-methylpentanoate (3-isopropylmalate) to 3-carboxy-4-methyl-2-oxopentanoate. The product decarboxylates to 4-methyl-2 oxopentanoate. The sequence is that of 3-isopropylmalate dehydrogenase from Rhodopirellula baltica (strain DSM 10527 / NCIMB 13988 / SH1).